Here is a 70-residue protein sequence, read N- to C-terminus: ATP synthase subunit c (70 aa).

Transmembrane regions (helical) follow at residues 4–24 (IATA…NGLI) and 47–67 (FIGI…GFLL).

It belongs to the ATPase C chain family. F-type ATPases have 2 components, F(1) - the catalytic core - and F(0) - the membrane proton channel. F(1) has five subunits: alpha(3), beta(3), gamma(1), delta(1), epsilon(1). F(0) has three main subunits: a(1), b(2) and c(10-14). The alpha and beta chains form an alternating ring which encloses part of the gamma chain. F(1) is attached to F(0) by a central stalk formed by the gamma and epsilon chains, while a peripheral stalk is formed by the delta and b chains.

The protein localises to the cell membrane. In terms of biological role, f(1)F(0) ATP synthase produces ATP from ADP in the presence of a proton or sodium gradient. F-type ATPases consist of two structural domains, F(1) containing the extramembraneous catalytic core and F(0) containing the membrane proton channel, linked together by a central stalk and a peripheral stalk. During catalysis, ATP synthesis in the catalytic domain of F(1) is coupled via a rotary mechanism of the central stalk subunits to proton translocation. Functionally, key component of the F(0) channel; it plays a direct role in translocation across the membrane. A homomeric c-ring of between 10-14 subunits forms the central stalk rotor element with the F(1) delta and epsilon subunits. In Exiguobacterium sibiricum (strain DSM 17290 / CCUG 55495 / CIP 109462 / JCM 13490 / 255-15), this protein is ATP synthase subunit c.